Reading from the N-terminus, the 598-residue chain is Elongation factor 4 (598 aa).

The region spanning 2 to 184 (KNIRNFSIIA…EIVAKIPAPE (183 aa)) is the tr-type G domain. Residues 14 to 19 (DHGKST) and 131 to 134 (NKID) each bind GTP.

The protein belongs to the TRAFAC class translation factor GTPase superfamily. Classic translation factor GTPase family. LepA subfamily.

Its subcellular location is the cell inner membrane. It catalyses the reaction GTP + H2O = GDP + phosphate + H(+). Required for accurate and efficient protein synthesis under certain stress conditions. May act as a fidelity factor of the translation reaction, by catalyzing a one-codon backward translocation of tRNAs on improperly translocated ribosomes. Back-translocation proceeds from a post-translocation (POST) complex to a pre-translocation (PRE) complex, thus giving elongation factor G a second chance to translocate the tRNAs correctly. Binds to ribosomes in a GTP-dependent manner. This chain is Elongation factor 4, found in Haemophilus influenzae (strain ATCC 51907 / DSM 11121 / KW20 / Rd).